The following is a 715-amino-acid chain: DNA ligase (715 aa).

NAD(+) contacts are provided by residues Asp47–Asp51, Ser96–Leu97, and Glu129. Catalysis depends on Lys131, which acts as the N6-AMP-lysine intermediate. Residues Arg152, Glu189, Lys306, and Lys330 each coordinate NAD(+). Zn(2+)-binding residues include Cys435, Cys438, Cys453, and Cys459. Residues Lys637–Gly715 form the BRCT domain.

This sequence belongs to the NAD-dependent DNA ligase family. LigA subfamily. Requires Mg(2+) as cofactor. It depends on Mn(2+) as a cofactor.

The enzyme catalyses NAD(+) + (deoxyribonucleotide)n-3'-hydroxyl + 5'-phospho-(deoxyribonucleotide)m = (deoxyribonucleotide)n+m + AMP + beta-nicotinamide D-nucleotide.. Functionally, DNA ligase that catalyzes the formation of phosphodiester linkages between 5'-phosphoryl and 3'-hydroxyl groups in double-stranded DNA using NAD as a coenzyme and as the energy source for the reaction. It is essential for DNA replication and repair of damaged DNA. The protein is DNA ligase of Rhodopseudomonas palustris (strain BisA53).